The chain runs to 86 residues: MAPSTTVTRRVKRKAPRAFLKRTLKQKKPHLGLGRCCDLLIHLNCLLFIQRLAEESRTNACESKSRVIKKDHVLAAGKVILKKSRG.

This sequence belongs to the CENP-W/WIP1 family. In terms of assembly, heterodimer with CENPT; this dimer coassembles with CENPS-CENPX heterodimers at centromeres to form the tetrameric CENP-T-W-S-X complex, which is a subcomplex of the large constitutive centromere-associated network (CCAN, also known as the interphase centromere complex or ICEN). Interacts with NPM1.

The protein localises to the nucleus. The protein resides in the chromosome. Its subcellular location is the centromere. It is found in the kinetochore. It localises to the nucleus matrix. The protein localises to the nucleolus. Its function is as follows. Component of the CENPA-NAC (nucleosome-associated) complex, a complex that plays a central role in assembly of kinetochore proteins, mitotic progression and chromosome segregation. The CENPA-NAC complex recruits the CENPA-CAD (nucleosome distal) complex and may be involved in incorporation of newly synthesized CENPA into centromeres. Part of a nucleosome-associated complex that binds specifically to histone H3-containing nucleosomes at the centromere, as opposed to nucleosomes containing CENPA. Component of the heterotetrameric CENP-T-W-S-X complex that binds and supercoils DNA, and plays an important role in kinetochore assembly. CENPW has a fundamental role in kinetochore assembly and function. It is one of the inner kinetochore proteins, with most further proteins binding downstream. Required for normal chromosome organization and normal progress through mitosis. This is Centromere protein W (Cenpw) from Mus musculus (Mouse).